The primary structure comprises 131 residues: Small ribosomal subunit protein uS11 (131 aa).

The protein belongs to the universal ribosomal protein uS11 family. Part of the 30S ribosomal subunit. Interacts with proteins S7 and S18. Binds to IF-3.

Functionally, located on the platform of the 30S subunit, it bridges several disparate RNA helices of the 16S rRNA. Forms part of the Shine-Dalgarno cleft in the 70S ribosome. This chain is Small ribosomal subunit protein uS11, found in Chromobacterium violaceum (strain ATCC 12472 / DSM 30191 / JCM 1249 / CCUG 213 / NBRC 12614 / NCIMB 9131 / NCTC 9757 / MK).